We begin with the raw amino-acid sequence, 210 residues long: Dephospho-CoA kinase (210 aa).

One can recognise a DPCK domain in the interval 4–202 (WVGLTGGIGS…AFYSGIFASK (199 aa)). Position 12-17 (12-17 (GSGKSA)) interacts with ATP.

It belongs to the CoaE family.

Its subcellular location is the cytoplasm. It carries out the reaction 3'-dephospho-CoA + ATP = ADP + CoA + H(+). Its pathway is cofactor biosynthesis; coenzyme A biosynthesis; CoA from (R)-pantothenate: step 5/5. In terms of biological role, catalyzes the phosphorylation of the 3'-hydroxyl group of dephosphocoenzyme A to form coenzyme A. In Neisseria gonorrhoeae, this protein is Dephospho-CoA kinase.